The primary structure comprises 664 residues: DNA ligase (664 aa).

Residues 32–36 (DKDYD) and 80–81 (SL) contribute to the NAD(+) site. Lysine 122 functions as the N6-AMP-lysine intermediate in the catalytic mechanism. NAD(+) contacts are provided by arginine 144, glutamate 178, and lysine 314. Zn(2+) contacts are provided by cysteine 407, cysteine 410, cysteine 423, and cysteine 429. Residues 587 to 664 (IKENIFNGKT…SEEDFKNMIG (78 aa)) enclose the BRCT domain.

This sequence belongs to the NAD-dependent DNA ligase family. LigA subfamily. Requires Mg(2+) as cofactor. The cofactor is Mn(2+).

It catalyses the reaction NAD(+) + (deoxyribonucleotide)n-3'-hydroxyl + 5'-phospho-(deoxyribonucleotide)m = (deoxyribonucleotide)n+m + AMP + beta-nicotinamide D-nucleotide.. Its function is as follows. DNA ligase that catalyzes the formation of phosphodiester linkages between 5'-phosphoryl and 3'-hydroxyl groups in double-stranded DNA using NAD as a coenzyme and as the energy source for the reaction. It is essential for DNA replication and repair of damaged DNA. The polypeptide is DNA ligase (Clostridium novyi (strain NT)).